The primary structure comprises 188 residues: Large ribosomal subunit protein eL18 (188 aa).

A Glycyl lysine isopeptide (Lys-Gly) (interchain with G-Cter in SUMO2) cross-link involves residue Lys-119. Residue Ser-130 is modified to Phosphoserine. The tract at residues 150 to 188 is disordered; that stretch reads RHFGKAPRTPHSHTKPYVRSKGRKFERARGRWASRGYKN. Composition is skewed to basic residues over residues 151–171 and 179–188; these read HFGKAPRTPHSHTKPYVRSKG and GRWASRGYKN. A Phosphothreonine modification is found at Thr-158. Lys-164 is covalently cross-linked (Glycyl lysine isopeptide (Lys-Gly) (interchain with G-Cter in SUMO2)).

It belongs to the eukaryotic ribosomal protein eL18 family. Component of the large ribosomal subunit.

It localises to the cytoplasm. The protein localises to the cytosol. The protein resides in the rough endoplasmic reticulum. Its function is as follows. Component of the large ribosomal subunit. The ribosome is a large ribonucleoprotein complex responsible for the synthesis of proteins in the cell. This Oryctolagus cuniculus (Rabbit) protein is Large ribosomal subunit protein eL18 (RPL18).